Reading from the N-terminus, the 503-residue chain is Poxin-Schlafen (503 aa).

His15 (proton donor) is an active-site residue. Tyr136 acts as the Shared with catalytic histidine of dimeric partner in catalysis. Residue Lys140 is the Proton acceptor; shared with catalytic histidine of dimeric partner of the active site.

It in the N-terminal section; belongs to the poxin family. This sequence in the C-terminal section; belongs to the Schlafen protein family. Subgroup poxviridae B3 subfamily. In terms of assembly, homodimer.

The catalysed reaction is 2',3'-cGAMP + H2O = Gp(2'-5')Ap(3') + H(+). In terms of biological role, nuclease that is responsible for viral evasion of host cGAS-STING innate immunity. Cleaves 2',3'-cGAMP which is produced by host cGAS following recognition of cytosolic DNA and blocks the subsequent 2',3'-cGAMP-mediated activation of TMEM173/STING, which normally spreads to adjacent cells and activates the interferon and NF-kappa-B immune responses. This Cynomys gunnisoni (Gunnison's prairie dog) protein is Poxin-Schlafen (OPG188).